A 363-amino-acid polypeptide reads, in one-letter code: Chorismate synthase (363 aa).

Arg-48 serves as a coordination point for NADP(+). FMN is bound by residues 125–127, 238–239, Gly-278, 293–297, and Arg-319; these read RSS, NA, and KPTAS.

Belongs to the chorismate synthase family. Homotetramer. It depends on FMNH2 as a cofactor.

It carries out the reaction 5-O-(1-carboxyvinyl)-3-phosphoshikimate = chorismate + phosphate. It participates in metabolic intermediate biosynthesis; chorismate biosynthesis; chorismate from D-erythrose 4-phosphate and phosphoenolpyruvate: step 7/7. Its function is as follows. Catalyzes the anti-1,4-elimination of the C-3 phosphate and the C-6 proR hydrogen from 5-enolpyruvylshikimate-3-phosphate (EPSP) to yield chorismate, which is the branch point compound that serves as the starting substrate for the three terminal pathways of aromatic amino acid biosynthesis. This reaction introduces a second double bond into the aromatic ring system. The sequence is that of Chorismate synthase from Acinetobacter baumannii (strain SDF).